Here is a 126-residue protein sequence, read N- to C-terminus: Fluoride-specific ion channel FluC (126 aa).

The next 4 helical transmembrane spans lie at 1-21, 40-60, 72-92, and 104-124; these read MIVIFVGLAGVLGALMRFGLD, LATLSVNVLGSFIIGLAGGFA, AISIGIAGGLTTFSSFAVATV, and MVNIGLNLVLGLGAAWLGLSL. Na(+) contacts are provided by glycine 79 and threonine 82.

It belongs to the fluoride channel Fluc/FEX (TC 1.A.43) family.

It localises to the cell membrane. It catalyses the reaction fluoride(in) = fluoride(out). With respect to regulation, na(+) is not transported, but it plays an essential structural role and its presence is essential for fluoride channel function. Its function is as follows. Fluoride-specific ion channel. Important for reducing fluoride concentration in the cell, thus reducing its toxicity. The polypeptide is Fluoride-specific ion channel FluC (Renibacterium salmoninarum (strain ATCC 33209 / DSM 20767 / JCM 11484 / NBRC 15589 / NCIMB 2235)).